The sequence spans 125 residues: uncharacterized protein (125 aa).

The interval 50 to 73 (QTSDFSDESSRSDSSSVTNENEVS) is disordered.

This is an uncharacterized protein from Microplitis demolitor (Parasitoid wasp).